The primary structure comprises 158 residues: 2-C-methyl-D-erythritol 2,4-cyclodiphosphate synthase (158 aa).

Residues D9 and H11 each contribute to the a divalent metal cation site. Residues 9 to 11 (DVH) and 35 to 36 (HS) contribute to the 4-CDP-2-C-methyl-D-erythritol 2-phosphate site. A divalent metal cation is bound at residue H43. Residues 57-59 (DIG), 62-66 (FPDTD), 101-107 (AQAPKMA), 133-136 (TTTE), F140, and R143 contribute to the 4-CDP-2-C-methyl-D-erythritol 2-phosphate site.

Belongs to the IspF family. In terms of assembly, homotrimer. The cofactor is a divalent metal cation.

It catalyses the reaction 4-CDP-2-C-methyl-D-erythritol 2-phosphate = 2-C-methyl-D-erythritol 2,4-cyclic diphosphate + CMP. The protein operates within isoprenoid biosynthesis; isopentenyl diphosphate biosynthesis via DXP pathway; isopentenyl diphosphate from 1-deoxy-D-xylulose 5-phosphate: step 4/6. Involved in the biosynthesis of isopentenyl diphosphate (IPP) and dimethylallyl diphosphate (DMAPP), two major building blocks of isoprenoid compounds. Catalyzes the conversion of 4-diphosphocytidyl-2-C-methyl-D-erythritol 2-phosphate (CDP-ME2P) to 2-C-methyl-D-erythritol 2,4-cyclodiphosphate (ME-CPP) with a corresponding release of cytidine 5-monophosphate (CMP). This is 2-C-methyl-D-erythritol 2,4-cyclodiphosphate synthase from Vibrio cholerae serotype O1 (strain ATCC 39541 / Classical Ogawa 395 / O395).